A 154-amino-acid chain; its full sequence is Nascent polypeptide-associated complex subunit beta (154 aa).

The NAC-A/B domain occupies E34–I99. The disordered stretch occupies residues K125–E154.

The protein belongs to the NAC-beta family. Part of the nascent polypeptide-associated complex (NAC), consisting of EGD2 and EGD1. NAC associates with ribosomes via EGD1.

The protein resides in the cytoplasm. It localises to the nucleus. Component of the nascent polypeptide-associated complex (NAC), a dynamic component of the ribosomal exit tunnel, protecting the emerging polypeptides from interaction with other cytoplasmic proteins to ensure appropriate nascent protein targeting. The NAC complex also promotes mitochondrial protein import by enhancing productive ribosome interactions with the outer mitochondrial membrane and blocks the inappropriate interaction of ribosomes translating non-secretory nascent polypeptides with translocation sites in the membrane of the endoplasmic reticulum. EGD1 may act as a transcription factor that exert a negative effect on the expression of several genes that are transcribed by RNA polymerase II. The protein is Nascent polypeptide-associated complex subunit beta (EGD1) of Debaryomyces hansenii (strain ATCC 36239 / CBS 767 / BCRC 21394 / JCM 1990 / NBRC 0083 / IGC 2968) (Yeast).